The following is a 130-amino-acid chain: Astrocytic phosphoprotein PEA-15 (130 aa).

A DED domain is found at 3-81; the sequence is EYGTLLQDLT…RPDLLTMVVD (79 aa). Phosphoserine is present on residues Ser61 and Ser90. The microtubule-binding stretch occupies residues 98–107; that stretch reads KLTRIPSAKK. Ser104 is modified (phosphoserine; by PKC). Ser116 carries the phosphoserine; by CaMK2 modification. The tract at residues 122–129 is microtubule-binding; the sequence is KLAPPPKK.

As to quaternary structure, binds RPS6KA3, MAPK3 and MAPK1. Interacts with CASP8 and FADD. Transient interaction with PLD1 and PLD2. In terms of processing, phosphorylated by protein kinase C and calcium-calmodulin-dependent protein kinase. These phosphorylation events are modulated by neurotransmitters or hormones. Predominantly expressed in the brain. Low levels in some peripheral organs.

The protein resides in the cytoplasm. Its function is as follows. Blocks Ras-mediated inhibition of integrin activation and modulates the ERK MAP kinase cascade. Inhibits RPS6KA3 activities by retaining it in the cytoplasm. Inhibits both TNFRSF6- and TNFRSF1A-mediated CASP8 activity and apoptosis. Regulates glucose transport by controlling both the content of SLC2A1 glucose transporters on the plasma membrane and the insulin-dependent trafficking of SLC2A4 from the cell interior to the surface. The protein is Astrocytic phosphoprotein PEA-15 (Pea15) of Mus musculus (Mouse).